Consider the following 291-residue polypeptide: MALTTSRASGSPRIQTHTVVRIAKRHPLVLLGGGILLLLILLALAAPLYSGDPLVMDPFKRLQQPSASMWFGTDNLGRDVFARTIYGARISLIVGLLSAVCAAVCGLLIGVIAGYSRTFDNIIMRVMDGLMSIPTFLLAIALLSLTGPGIGILIVAIAIPETPAVTRLVRSVVLSVRSRPYVEAALCGGARLPRVLWRHILPSTIPPLMVQSATVCASAIMTEAGLSFIGVGVPSEIPSWGNMIANSRLFLAIAPLTIFAPGLCLAVTVLAVNLLGDGLRDMFDPRSKRRR.

5 helical membrane-spanning segments follow: residues 28–48 (LVLLGGGILLLLILLALAAPL), 92–112 (LIVGLLSAVCAAVCGLLIGVI), 137–157 (LLAIALLSLTGPGIGILIVAI), 213–233 (ATVCASAIMTEAGLSFIGVGV), and 249–269 (LFLAIAPLTIFAPGLCLAVTV). The 189-residue stretch at 88 to 276 (ARISLIVGLL…VTVLAVNLLG (189 aa)) folds into the ABC transmembrane type-1 domain.

This sequence belongs to the binding-protein-dependent transport system permease family. OppBC subfamily.

It localises to the cell inner membrane. Functionally, probably part of the binding-protein-dependent transport system y4tOPQRS for a peptide. Probably responsible for the translocation of the substrate across the membrane. This is Probable peptide ABC transporter permease protein y4tQ from Sinorhizobium fredii (strain NBRC 101917 / NGR234).